The sequence spans 348 residues: Phospho-2-dehydro-3-deoxyheptonate aldolase, Trp-sensitive (348 aa).

It belongs to the class-I DAHP synthase family.

It carries out the reaction D-erythrose 4-phosphate + phosphoenolpyruvate + H2O = 7-phospho-2-dehydro-3-deoxy-D-arabino-heptonate + phosphate. It functions in the pathway metabolic intermediate biosynthesis; chorismate biosynthesis; chorismate from D-erythrose 4-phosphate and phosphoenolpyruvate: step 1/7. Functionally, stereospecific condensation of phosphoenolpyruvate (PEP) and D-erythrose-4-phosphate (E4P) giving rise to 3-deoxy-D-arabino-heptulosonate-7-phosphate (DAHP). In Salmonella typhi, this protein is Phospho-2-dehydro-3-deoxyheptonate aldolase, Trp-sensitive (aroH).